The chain runs to 94 residues: uncharacterized protein (94 aa).

The segment at 1–22 (MATLQQAQQQNNQLTQQNNQLT) is disordered. Residues 1–77 (MATLQQAQQQ…NRLHSENHRL (77 aa)) adopt a coiled-coil conformation.

This is an uncharacterized protein from Acheta domesticus (House cricket).